A 217-amino-acid polypeptide reads, in one-letter code: Lipid transferase CIDEA (217 aa).

Positions 33–110 (PARPFRVSNH…ILEKGQKWTP (78 aa)) constitute a CIDE-N domain. The segment at 163–180 (CTSFKAVLRNLLRFMSYA) is amphipathic helix.

It belongs to the CIDE family. In terms of assembly, homodimer. Interacts with CIDEC. Directly interacts with CEBPB. Interacts with isoform CLSTN3beta of CLSTN3; inhibiting the lipid transferase activity of CIDEA. Highly expressed in brown adipose tissue and, at lower levels, in white adipose tissue (at protein level). Undetectable in undifferentiated preadipocytes. Expressed in mammary gland during pregnancy and lactation, in epithelial cells, but not in the surrounding adipose tissue. Secreted into milk via milk fat globules.

It is found in the lipid droplet. The protein resides in the nucleus. It catalyses the reaction a triacyl-sn-glycerol(in) = a triacyl-sn-glycerol(out). Functionally, lipid transferase that promotes unilocular lipid droplet formation by mediating lipid droplet fusion. Lipid droplet fusion promotes their enlargement, restricting lipolysis and favoring lipid storage. Localizes on the lipid droplet surface, at focal contact sites between lipid droplets, and mediates atypical lipid droplet fusion by promoting directional net neutral lipid transfer from the smaller to larger lipid droplets. The transfer direction may be driven by the internal pressure difference between the contacting lipid droplet pair and occurs at a lower rate than that promoted by CIDEC. May also act as a CEBPB coactivator in epithelial cells to control the expression of a subset of CEBPB downstream target genes, including ID2, IGF1, PRLR, SOCS1, SOCS3, XDH, but not casein. By interacting with CEBPB, strengthens the association of CEBPB with the XDH promoter, increases histone acetylation and dissociates HDAC1 from the promoter. When overexpressed, induces apoptosis; the physiological significance of its role in apoptosis is unclear. This chain is Lipid transferase CIDEA, found in Mus musculus (Mouse).